Reading from the N-terminus, the 968-residue chain is RNA polymerase-associated protein RapA (968 aa).

A Helicase ATP-binding domain is found at 164–334 (DVGRRHAPRV…FARLRLLDPN (171 aa)). 177-184 (DEVGLGKT) serves as a coordination point for ATP. The DEAH box signature appears at 280–283 (DEAH). One can recognise a Helicase C-terminal domain in the interval 490–662 (RVEWLMGYLT…YLASPVQTEG (173 aa)).

The protein belongs to the SNF2/RAD54 helicase family. RapA subfamily. Interacts with the RNAP. Has a higher affinity for the core RNAP than for the holoenzyme. Its ATPase activity is stimulated by binding to RNAP.

Its function is as follows. Transcription regulator that activates transcription by stimulating RNA polymerase (RNAP) recycling in case of stress conditions such as supercoiled DNA or high salt concentrations. Probably acts by releasing the RNAP, when it is trapped or immobilized on tightly supercoiled DNA. Does not activate transcription on linear DNA. Probably not involved in DNA repair. The protein is RNA polymerase-associated protein RapA of Shigella sonnei (strain Ss046).